A 373-amino-acid chain; its full sequence is Homoserine O-acetyltransferase (373 aa).

Residues asparagine 52 to glutamate 356 form the AB hydrolase-1 domain. Serine 157 functions as the Nucleophile in the catalytic mechanism. Arginine 227 contributes to the substrate binding site. Active-site residues include aspartate 320 and histidine 350. A substrate-binding site is contributed by aspartate 351.

It belongs to the AB hydrolase superfamily. MetX family. In terms of assembly, homodimer.

The protein resides in the cytoplasm. It catalyses the reaction L-homoserine + acetyl-CoA = O-acetyl-L-homoserine + CoA. The protein operates within amino-acid biosynthesis; L-methionine biosynthesis via de novo pathway; O-acetyl-L-homoserine from L-homoserine: step 1/1. Its function is as follows. Transfers an acetyl group from acetyl-CoA to L-homoserine, forming acetyl-L-homoserine. The protein is Homoserine O-acetyltransferase of Mycobacterium sp. (strain KMS).